The sequence spans 261 residues: (R)-S-adenosyl-L-methionine hydrolase (261 aa).

Residues D12, D72, and N187 each contribute to the adenosine site. Residues N187, S231, and V239 each coordinate (R)-S-adenosyl-L-methionine. V239 provides a ligand contact to adenosine.

Belongs to the SAM hydrolase / SAM-dependent halogenase family.

It catalyses the reaction (R)-S-adenosyl-L-methionine + H2O = adenosine + L-methionine + H(+). Specifically hydrolyzes (R)-S-adenosyl-L-methionine ((R)-SAM), the inactive form of the ubiquitous cofactor SAM, into adenosine and L-methionine. Is stereoselective as it cannot use the active form of SAM, (S)-S-adenosyl-L-methionine, as substrate. Likely plays a role in preventing accumulation of (R)-S-adenosyl-L-methionine in cells; maintenance of (S)-S-denosyl-L-methionine homochirality is important for cellular health given that the (R)-form is largely inactive as a methyl donor and can function as an inhibitor of methyltransferases. The chain is (R)-S-adenosyl-L-methionine hydrolase from Salinispora tropica (strain ATCC BAA-916 / DSM 44818 / JCM 13857 / NBRC 105044 / CNB-440).